Reading from the N-terminus, the 131-residue chain is Large ribosomal subunit protein eL32 (131 aa).

This sequence belongs to the eukaryotic ribosomal protein eL32 family.

This is Large ribosomal subunit protein eL32 (RPL32) from Candida glabrata (strain ATCC 2001 / BCRC 20586 / JCM 3761 / NBRC 0622 / NRRL Y-65 / CBS 138) (Yeast).